Here is an 879-residue protein sequence, read N- to C-terminus: DNA methyltransferase A (879 aa).

This sequence belongs to the methyltransferase superfamily.

The catalysed reaction is a 2'-deoxyadenosine in DNA + S-adenosyl-L-methionine = an N(6)-methyl-2'-deoxyadenosine in DNA + S-adenosyl-L-homocysteine + H(+). In terms of biological role, recognizes the double-stranded sequence 5'-GACGAG-3' and methylates A-5, yielding m6A. m6A methylation functions as a transcriptional modifier, promoting transcription of a number of genes (at least scpA, hbs, rnhC, yumC and zapA). One studied mechanism is via transcriptional repressor ScoC (also called hpr) which binds to non-methylated scpA promoter; when the m6A target is methylated ScoC no longer binds and scpA transcription is up-regulated. Other mechanisms for gene expression regulation probably exist. Binds DNA with and without the target sequence. Although it resembles a restriction-modification system, it does not have detectable endonuclease activity under tested conditions. A gamma subtype methylase. The protein is DNA methyltransferase A of Bacillus subtilis (strain 168).